The primary structure comprises 938 residues: Isoleucine--tRNA ligase (938 aa).

The 'HIGH' region motif lies at Pro58–His68. An L-isoleucyl-5'-AMP-binding site is contributed by Glu566. The short motif at Lys607–Ser611 is the 'KMSKS' region element. Lys610 lines the ATP pocket. Zn(2+)-binding residues include Cys906, Cys909, Cys926, and Cys929.

It belongs to the class-I aminoacyl-tRNA synthetase family. IleS type 1 subfamily. In terms of assembly, monomer. It depends on Zn(2+) as a cofactor.

The protein localises to the cytoplasm. It catalyses the reaction tRNA(Ile) + L-isoleucine + ATP = L-isoleucyl-tRNA(Ile) + AMP + diphosphate. Catalyzes the attachment of isoleucine to tRNA(Ile). As IleRS can inadvertently accommodate and process structurally similar amino acids such as valine, to avoid such errors it has two additional distinct tRNA(Ile)-dependent editing activities. One activity is designated as 'pretransfer' editing and involves the hydrolysis of activated Val-AMP. The other activity is designated 'posttransfer' editing and involves deacylation of mischarged Val-tRNA(Ile). In Nitratidesulfovibrio vulgaris (strain ATCC 29579 / DSM 644 / CCUG 34227 / NCIMB 8303 / VKM B-1760 / Hildenborough) (Desulfovibrio vulgaris), this protein is Isoleucine--tRNA ligase.